A 157-amino-acid chain; its full sequence is NADPH-dependent 7-cyano-7-deazaguanine reductase (157 aa).

Residue Cys55 is the Thioimide intermediate of the active site. The active-site Proton donor is Asp62. Residues 77-79 and 96-97 each bind substrate; these read VES and HE.

It belongs to the GTP cyclohydrolase I family. QueF type 1 subfamily.

Its subcellular location is the cytoplasm. The catalysed reaction is 7-aminomethyl-7-carbaguanine + 2 NADP(+) = 7-cyano-7-deazaguanine + 2 NADPH + 3 H(+). It functions in the pathway tRNA modification; tRNA-queuosine biosynthesis. In terms of biological role, catalyzes the NADPH-dependent reduction of 7-cyano-7-deazaguanine (preQ0) to 7-aminomethyl-7-deazaguanine (preQ1). The protein is NADPH-dependent 7-cyano-7-deazaguanine reductase of Neisseria meningitidis serogroup B (strain ATCC BAA-335 / MC58).